The sequence spans 121 residues: Small ribosomal subunit protein bS6 (121 aa).

This sequence belongs to the bacterial ribosomal protein bS6 family.

Functionally, binds together with bS18 to 16S ribosomal RNA. The protein is Small ribosomal subunit protein bS6 of Rickettsia conorii (strain ATCC VR-613 / Malish 7).